A 309-amino-acid chain; its full sequence is Porphobilinogen deaminase (309 aa).

Cys242 carries the post-translational modification S-(dipyrrolylmethanemethyl)cysteine.

It belongs to the HMBS family. Monomer. It depends on dipyrromethane as a cofactor.

The catalysed reaction is 4 porphobilinogen + H2O = hydroxymethylbilane + 4 NH4(+). The protein operates within porphyrin-containing compound metabolism; protoporphyrin-IX biosynthesis; coproporphyrinogen-III from 5-aminolevulinate: step 2/4. Functionally, tetrapolymerization of the monopyrrole PBG into the hydroxymethylbilane pre-uroporphyrinogen in several discrete steps. The chain is Porphobilinogen deaminase from Hamiltonella defensa subsp. Acyrthosiphon pisum (strain 5AT).